We begin with the raw amino-acid sequence, 364 residues long: Aminomethyltransferase (364 aa).

Belongs to the GcvT family. In terms of assembly, the glycine cleavage system is composed of four proteins: P, T, L and H.

It carries out the reaction N(6)-[(R)-S(8)-aminomethyldihydrolipoyl]-L-lysyl-[protein] + (6S)-5,6,7,8-tetrahydrofolate = N(6)-[(R)-dihydrolipoyl]-L-lysyl-[protein] + (6R)-5,10-methylene-5,6,7,8-tetrahydrofolate + NH4(+). Its function is as follows. The glycine cleavage system catalyzes the degradation of glycine. The polypeptide is Aminomethyltransferase (Staphylococcus carnosus (strain TM300)).